Reading from the N-terminus, the 114-residue chain is Aspartate 1-decarboxylase (114 aa).

Ser25 serves as the catalytic Schiff-base intermediate with substrate; via pyruvic acid. Position 25 is a pyruvic acid (Ser) (Ser25). Thr57 contacts substrate. The active-site Proton donor is the Tyr58. A substrate-binding site is contributed by 73 to 75; sequence GAA.

Belongs to the PanD family. In terms of assembly, heterooctamer of four alpha and four beta subunits. The cofactor is pyruvate. In terms of processing, is synthesized initially as an inactive proenzyme, which is activated by self-cleavage at a specific serine bond to produce a beta-subunit with a hydroxyl group at its C-terminus and an alpha-subunit with a pyruvoyl group at its N-terminus.

It is found in the cytoplasm. The enzyme catalyses L-aspartate + H(+) = beta-alanine + CO2. The protein operates within cofactor biosynthesis; (R)-pantothenate biosynthesis; beta-alanine from L-aspartate: step 1/1. Catalyzes the pyruvoyl-dependent decarboxylation of aspartate to produce beta-alanine. This Thermotoga sp. (strain RQ2) protein is Aspartate 1-decarboxylase.